The sequence spans 177 residues: Centromere protein R (177 aa).

Lys8 participates in a covalent cross-link: Glycyl lysine isopeptide (Lys-Gly) (interchain with G-Cter in SUMO2). Residues 9-13 (LDGLL) carry the LXXLL motif motif. Phosphoserine is present on Ser17. The tract at residues 20-50 (PSKITRKKSVITYSPTTGTCQMSLFASPTSS) is DD1. A Glycyl lysine isopeptide (Lys-Gly) (interchain with G-Cter in SUMO2) cross-link involves residue Lys22. At Ser28 the chain carries Phosphoserine. Positions 41–50 (MSLFASPTSS) are enriched in polar residues. Residues 41-81 (MSLFASPTSSEEQKHRNGLSNEKRKKLNHPSLTESKESTTK) are disordered. Residues 63–66 (KRKK) carry the Nuclear localization signal motif. At Ser71 the chain carries Phosphoserine. Residues 83-113 (NDEFMMLLSKVEKLSEEIMEIMQNLSSIQAL) adopt a coiled-coil conformation. Positions 172 to 176 (LKAIL) match the LXXIL motif motif.

Homodimer; mediated by the coiled coil domain. Isoform 3, but not other isoforms, interacts with the cytoplasmic tail of integrin ITGB3. The relevance of the interaction with ITGB3 is however uncertain, since isoform 3 is mainly nuclear. Interacts with CCNA2 and MTA1. Interacts with NFKB1 NF-kappa-B subunit. Component of the CENPA-CAD complex, composed of CENPI, CENPK, CENPL, CENPO, CENPP, CENPQ, CENPR and CENPS. The CENPA-CAD complex interacts with the CENPA-NAC complex, at least composed of CENPA, CENPC, CENPH, CENPM, CENPN, CENPT and CENPU. Interacts with TASOR. As to expression, widely expressed. Expressed in spleen, thymus, prostate, ovary, small intestine and white blood cells. Highly expressed in testis and colon. Isoform 4 is expressed in platelets, lymphocytes and granulocytes.

The protein localises to the nucleus. The protein resides in the chromosome. It localises to the centromere. It is found in the kinetochore. Its subcellular location is the cytoplasm. Transcription coregulator that can have both coactivator and corepressor functions. Isoform 1, but not other isoforms, is involved in the coactivation of nuclear receptors for retinoid X (RXRs) and thyroid hormone (TRs) in a ligand-dependent fashion. In contrast, it does not coactivate nuclear receptors for retinoic acid, vitamin D, progesterone receptor, nor glucocorticoid. Acts as a coactivator for estrogen receptor alpha. Acts as a transcriptional corepressor via its interaction with the NFKB1 NF-kappa-B subunit, possibly by interfering with the transactivation domain of NFKB1. Induces apoptosis in breast cancer cells, but not in other cancer cells, via a caspase-2 mediated pathway that involves mitochondrial membrane permeabilization but does not require other caspases. May also act as an inhibitor of cyclin A-associated kinase. Also acts a component of the CENPA-CAD (nucleosome distal) complex, a complex recruited to centromeres which is involved in assembly of kinetochore proteins, mitotic progression and chromosome segregation. May be involved in incorporation of newly synthesized CENPA into centromeres via its interaction with the CENPA-NAC complex. In Homo sapiens (Human), this protein is Centromere protein R (ITGB3BP).